A 458-amino-acid chain; its full sequence is Periphilin-1 (458 aa).

Basic and acidic residues-rich tracts occupy residues 1-18 and 63-107; these read MWSE…ERAP and EGRS…DGFR. Disordered stretches follow at residues 1–51 and 63–284; these read MWSE…SYNR and EGRS…LFED. Positions 103–109 match the Nuclear localization signal motif; that stretch reads RDGFRRK. Lys-109 is covalently cross-linked (Glycyl lysine isopeptide (Lys-Gly) (interchain with G-Cter in SUMO2)). Phosphoserine occurs at positions 110, 114, 133, and 140. The span at 116–142 shows a compositional bias: basic and acidic residues; that stretch reads YARERSPYKRDNTFFRESPVGRKDSPH. Residues 143–154 show a composition bias toward low complexity; that stretch reads SRSGSSVSSRSY. Lys-160 is covalently cross-linked (Glycyl lysine isopeptide (Lys-Gly) (interchain with G-Cter in SUMO2)). Ser-161 and Ser-167 each carry phosphoserine. Lys-180 is covalently cross-linked (Glycyl lysine isopeptide (Lys-Gly) (interchain with G-Cter in SUMO2)). A compositionally biased stretch (basic and acidic residues) spans 181–194; sequence RQNEGNPERDKERP. Ser-197 carries the phosphoserine modification. Residue Lys-199 forms a Glycyl lysine isopeptide (Lys-Gly) (interchain with G-Cter in SUMO2) linkage. Residues Ser-201 and Ser-205 each carry the phosphoserine modification. Over residues 205-215 the composition is skewed to low complexity; it reads SPSSGSAVSSS. Positions 217 to 230 are enriched in basic and acidic residues; sequence VLDKPSRLTEKELA. A Glycyl lysine isopeptide (Lys-Gly) (interchain with G-Cter in SUMO2) cross-link involves residue Lys-227. An N6-acetyllysine; alternate mark is found at Lys-235 and Lys-240. Glycyl lysine isopeptide (Lys-Gly) (interchain with G-Cter in SUMO2); alternate cross-links involve residues Lys-235 and Lys-240. The segment covering 237-246 has biased composition (basic and acidic residues); the sequence is AAEKLEKSDE. A Phosphoserine modification is found at Ser-325. Lys-328 participates in a covalent cross-link: Glycyl lysine isopeptide (Lys-Gly) (interchain with G-Cter in SUMO2). The interval 345-406 is disordered; the sequence is GQTWQQVPPV…TQLRRTTGAP (62 aa). The span at 377–386 shows a compositional bias: pro residues; it reads PQPPQAPQPL. Basic residues predominate over residues 388 to 398; the sequence is PRKKRVRRTTQ. Lys-453 participates in a covalent cross-link: Glycyl lysine isopeptide (Lys-Gly) (interchain with G-Cter in SUMO2).

As to quaternary structure, homodimer. Component of the HUSH complex; at least composed of TASOR, PPHLN1 and MPHOSPH8. Interacts with SIN3A and HDAC1. May interact with PPL. Substrate of transglutaminase (in vitro). As to expression, ubiquitous.

It is found in the nucleus. The protein localises to the cytoplasm. It localises to the chromosome. In terms of biological role, component of the HUSH complex, a multiprotein complex that mediates epigenetic repression. The HUSH complex is recruited to genomic loci rich in H3K9me3 and is probably required to maintain transcriptional silencing by promoting recruitment of SETDB1, a histone methyltransferase that mediates further deposition of H3K9me3. In the HUSH complex, contributes to the maintenance of the complex at chromatin. Acts as a transcriptional corepressor and regulates the cell cycle, probably via the HUSH complex. The HUSH complex is also involved in the silencing of unintegrated retroviral DNA: some part of the retroviral DNA formed immediately after infection remains unintegrated in the host genome and is transcriptionally repressed. May be involved in epithelial differentiation by contributing to epidermal integrity and barrier formation. The sequence is that of Periphilin-1 from Homo sapiens (Human).